We begin with the raw amino-acid sequence, 177 residues long: Large ribosomal subunit protein uL6 (177 aa).

It belongs to the universal ribosomal protein uL6 family. In terms of assembly, part of the 50S ribosomal subunit.

In terms of biological role, this protein binds to the 23S rRNA, and is important in its secondary structure. It is located near the subunit interface in the base of the L7/L12 stalk, and near the tRNA binding site of the peptidyltransferase center. In Pseudomonas syringae pv. syringae (strain B728a), this protein is Large ribosomal subunit protein uL6.